The following is a 491-amino-acid chain: MANTKDSYHIITMDTKESSIPSLPMKEIPGDYGVPFFGAIKDRYDFHYNQGADEFFRSRMKKYDSTVFRTNVPPGPFNARNSKVVVLVDAVSYPILFDNSQVDKENYFEGTFMSSPSFNGGYKVCGFLGTSDPKHTTLKGLFLSTLTRLHDKFIPIFTTSITSMFTSLEKELSEKGTSYFNPIGDNLSFEFLFRLFCEGKNPIDTSVGPNGPKIVDKWVFLQLAPLISLGLKFVPNFLEDLVLHTFPLPYILVKRDHQKLYNAFYNSMKDILDEAEKLGVKRDEACHNFVFLAGFNSYGGLKVFFPSLIKWIGTSGPSLHARLVKEIRTAVKEAGGVTLSAIDKMPLVKSVVYETLRMDPPVPFQTVKARKNIIITNHESSFLIKKDELIFGYQPLATKDSKVFKNAEEFNPDRFVGGGEKLLKYVYWSNGKEIDNPSVNDKQCPGKDLIVLMGRLLVVEFFMRYDTFEVEFGKLLLGSKVTFKSLTKATS.

3 residues coordinate heme b: Lys-104, His-135, and Lys-139. Residues Asn-296 and Lys-302 each coordinate (13S)-hydroperoxy-(9Z,11E)-octadecadienoate. Asn-296 lines the (13S)-hydroperoxy-(9Z,11E,15Z)-octadecatrienoate pocket. Positions 442 and 444 each coordinate heme b.

It belongs to the cytochrome P450 family. Heme b serves as cofactor. In terms of tissue distribution, expressed in roots. Not detected in aerial tissues, including cotyledons, leaves, stems and flower buds.

It catalyses the reaction (13S)-hydroperoxy-(9Z,11E,15Z)-octadecatrienoate = (9Z,13S,15Z)-12,13-epoxyoctadeca-9,11,15-trienoate + H2O. The enzyme catalyses (13S)-hydroperoxy-(9Z,11E)-octadecadienoate = (9Z,13S)-12,13-epoxyoctadeca-9,11-dienoate + H2O. It carries out the reaction (9Z,13S,15Z)-12,13-epoxyoctadeca-9,11,15-trienoate = (9S,13S,15Z)-12-oxophyto-10,15-dienoate. Its function is as follows. Cytochrome P450 metabolizing both 13- and 9-hydroperoxides of linoleic and linolenic acids, but with a marked preference for 9-hydroperoxy fatty acids. Catalyzes not only the synthesis of allene oxide, but also its hydrolysis and cyclization. The first step is the synthesis of (12Z)-9,10-epoxyoctadeca-10,12-dienoic acid (9,10-EOD) and the final products are (9R)-alpha-ketol and the racemic cis-10-oxo-11-phytoenoic acid. The cyclase activity possesses regiospecificity and (9Z)-12,13-epoxyoctadeca-9,11-dienoic acid (12,13-EOD) is significantly less efficient as a substrate for cyclopentenone production than 9,10-EOD. Has no hydroperoxide lyase activity. May play a defensive role against soil-borne pests that affect roots or juvenile tissues as they emerge from the germinating seed. This is Allene oxide synthase 3 from Solanum lycopersicum (Tomato).